We begin with the raw amino-acid sequence, 213 residues long: Uracil phosphoribosyltransferase (213 aa).

Residues Arg78, Arg103, and 131–139 contribute to the 5-phospho-alpha-D-ribose 1-diphosphate site; that span reads DPMLATGGT. Uracil contacts are provided by residues Ile197 and 202-204; that span reads GDA. Asp203 is a 5-phospho-alpha-D-ribose 1-diphosphate binding site.

This sequence belongs to the UPRTase family. Mg(2+) serves as cofactor.

The catalysed reaction is UMP + diphosphate = 5-phospho-alpha-D-ribose 1-diphosphate + uracil. The protein operates within pyrimidine metabolism; UMP biosynthesis via salvage pathway; UMP from uracil: step 1/1. With respect to regulation, allosterically activated by GTP. Functionally, catalyzes the conversion of uracil and 5-phospho-alpha-D-ribose 1-diphosphate (PRPP) to UMP and diphosphate. This is Uracil phosphoribosyltransferase from Bifidobacterium adolescentis (strain ATCC 15703 / DSM 20083 / NCTC 11814 / E194a).